A 448-amino-acid chain; its full sequence is 26S proteasome regulatory subunit 4 homolog (448 aa).

Polar residues predominate over residues 1 to 10 (MGQAQSGNFS). Residues 1–58 (MGQAQSGNFSNFGDGANGDNKKDQKKDKPKYEPPVPTRTGRRKKKAQSGPDASAKLPT) are disordered. Residues 19–31 (DNKKDQKKDKPKY) are compositionally biased toward basic and acidic residues. An ATP-binding site is contributed by 232-239 (GAPGTGKT).

It belongs to the AAA ATPase family.

The protein resides in the cytoplasm. The protein localises to the nucleus. Functionally, the 26S proteasome is involved in the ATP-dependent degradation of ubiquitinated proteins. The regulatory (or ATPase) complex confers ATP dependency and substrate specificity to the 26S complex. The protein is 26S proteasome regulatory subunit 4 homolog (mts2) of Schizosaccharomyces pombe (strain 972 / ATCC 24843) (Fission yeast).